Here is a 144-residue protein sequence, read N- to C-terminus: Large ribosomal subunit protein uL15 (144 aa).

The segment at 1–54 (MRLNTLSPAPGRVTSRKRVGRGIGSGLGKTAGRGHKGLKSRSGGTVKPGFEGGQ) is disordered. A compositionally biased stretch (gly residues) spans 21–31 (RGIGSGLGKTA).

Belongs to the universal ribosomal protein uL15 family. In terms of assembly, part of the 50S ribosomal subunit.

Its function is as follows. Binds to the 23S rRNA. In Teredinibacter turnerae (strain ATCC 39867 / T7901), this protein is Large ribosomal subunit protein uL15.